A 675-amino-acid polypeptide reads, in one-letter code: Protein PALS1 (675 aa).

Residues 1 to 345 are required for the correct localization of PALS1 and PATJ at cell-cell contacts and the normal formation of tight junctions and adherens junctions; sequence MTTSYMNGHV…QQIKPPPAKE (345 aa). A phosphoserine mark is found at Ser-14 and Ser-25. The segment at 21–140 is interaction with PARD6B; that stretch reads LDLASPEEYP…LKHIQHTLVD (120 aa). The segment at 51-79 is disordered; it reads RRSAQLERIRQQQEDMRRRREEEGKKQEL. Basic and acidic residues predominate over residues 54–79; that stretch reads AQLERIRQQQEDMRRRREEEGKKQEL. Phosphoserine occurs at positions 83 and 84. L27 domains follow at residues 120-177 and 179-235; these read NILD…SKAS and PFPL…MQLE. The interval 181–243 is interaction with LIN7C; it reads PLIANVQDLV…LEPITDERVY (63 aa). The PDZ domain maps to 256–336; sequence IVRIEKARDI…TLTFVLIPSQ (81 aa). Residues 345-417 enclose the SH3 domain; that stretch reads ETVIHVKAHF…PGKSFQQQRE (73 aa). The Guanylate kinase-like domain maps to 479-660; sequence KRPIILIGPQ…AYQELLRLIN (182 aa). Position 486–493 (486–493) interacts with ATP; that stretch reads GPQNCGQN.

The protein belongs to the MAGUK family. Heterodimer with MPP1. Forms a heterotrimeric complex composed of PALS1, LIN7B and PATJ; the N-terminal L27 domain of PALS1 interacts with the L27 domain of PATJ and the C-terminal L27 domain of PALS1 interacts with the L27 domain of LIN7B. Component of a complex composed of PALS1, CRB1 and MPP4. Component of a complex whose core is composed of ARHGAP17, AMOT, PALS1, PATJ and PARD3/PAR3. Component of a complex composed of PALS1, CRB1 and EPB41L5. Within the complex, interacts (via HOOK domain) with EPB41L5 (via FERM domain), and interacts with CRB1 (via intracellular domain). Component of a complex composed of PALS1, MPP3 and CRB1; PALS1 acts as a bridging protein between MPP3 (via guanylate kinase-like domain) and CRB1. Component of a complex composed of CRB3, PALS1 and PATJ. As part of the Crumbs complex; interacts with WWP1, the interaction is enhanced by AMOTL2 and facilitates WWP1 localization to the plasma membrane. The Crumbs complex promotes monoubiquitination of AMOTL2 by WWP1, which activates the Hippo signaling pathway. Interacts (via PDZ domain) with PATJ (via N-terminus). Interacts with EZR. Interacts (via PDZ domain) with CRB1 (via C-terminal ERLI motif). While the PDZ domain is sufficient for interaction with CRB1, the adjacent SH3 and guanylate kinase-like domains are likely to contribute to a high affinity interaction. Interacts with WWTR1/TAZ (via WW domain). Interacts with MPP7. Interacts (via PDZ domain) with CRB3 (via C-terminus). Interacts with LIN7C. Interacts with MPDZ. Interacts with PARD6B. Interacts with SC6A1. Interacts with CDH5; the interaction promotes PALS1 localization to cell junctions and is required for CDH5-mediated vascular lumen formation and endothelial cell. Interacts with NPHP1 (via coiled coil and SH3 domains). Interacts with NPHP4. Interacts with CRB2. As to expression, expressed in the retinal pigment epithelium (at protein level). Expressed in the vascular plexus of the retina (at protein level). In the brain, expressed in the dentate gyrus of hippocampus, striatum and cerebellum (at protein level). Expressed in the sciatic nerve (at protein level). Expressed in the kidney nephron (at protein level). Expressed in the lung, and heart. Expressed in placenta, brain, skeletal muscles, pancreas and liver.

It localises to the golgi apparatus. It is found in the cell membrane. The protein localises to the endomembrane system. The protein resides in the cell junction. Its subcellular location is the tight junction. It localises to the adherens junction. It is found in the cell projection. The protein localises to the axon. The protein resides in the perikaryon. Its subcellular location is the apical cell membrane. Functionally, plays a role in tight junction biogenesis and in the establishment of cell polarity in epithelial cells. Also involved in adherens junction biogenesis by ensuring correct localization of the exocyst complex protein EXOC4/SEC8 which allows trafficking of adherens junction structural component CDH1 to the cell surface. Plays a role through its interaction with CDH5 in vascular lumen formation and endothelial membrane polarity. Required during embryonic and postnatal retinal development. Required for the maintenance of cerebellar progenitor cells in an undifferentiated proliferative state, preventing premature differentiation, and is required for cerebellar histogenesis, fissure formation, cerebellar layer organization and cortical development. Plays a role in neuronal progenitor cell survival, potentially via promotion of mTOR signaling. Plays a role in the radial and longitudinal extension of the myelin sheath in Schwann cells. May modulate SC6A1/GAT1-mediated GABA uptake by stabilizing the transporter. May play a role in the T-cell receptor-mediated activation of NF-kappa-B. Required for localization of EZR to the apical membrane of parietal cells and may play a role in the dynamic remodeling of the apical cytoskeleton. Required for the normal polarized localization of the vesicular marker STX4. Required for the correct trafficking of the myelin proteins PMP22 and MAG. Involved in promoting phosphorylation and cytoplasmic retention of transcriptional coactivators YAP1 and WWTR1/TAZ which leads to suppression of TGFB1-dependent transcription of target genes such as CCN2/CTGF, SERPINE1/PAI1, SNAI1/SNAIL1 and SMAD7. The chain is Protein PALS1 from Mus musculus (Mouse).